The following is a 307-amino-acid chain: Malate dehydrogenase (307 aa).

Residues 8–13 (GAGRVG) and Asp-33 each bind NAD(+). 2 residues coordinate substrate: Arg-82 and Arg-88. NAD(+)-binding positions include Asn-95 and 118–120 (VSN). Substrate is bound by residues Asn-120 and Arg-151. Catalysis depends on His-175, which acts as the Proton acceptor.

This sequence belongs to the LDH/MDH superfamily. MDH type 3 family.

The catalysed reaction is (S)-malate + NAD(+) = oxaloacetate + NADH + H(+). Its function is as follows. Catalyzes the reversible oxidation of malate to oxaloacetate. The polypeptide is Malate dehydrogenase (Thioalkalivibrio sulfidiphilus (strain HL-EbGR7)).